The following is a 296-amino-acid chain: Arginase (296 aa).

Positions 97, 120, 122, and 124 each coordinate Mn(2+). Substrate is bound by residues 122–126 (HGDLN), 133–135 (SGN), and aspartate 176. Residues aspartate 223 and aspartate 225 each coordinate Mn(2+). Positions 237 and 268 each coordinate substrate.

The protein belongs to the arginase family. The cofactor is Mn(2+).

It catalyses the reaction L-arginine + H2O = urea + L-ornithine. Its pathway is nitrogen metabolism; urea cycle; L-ornithine and urea from L-arginine: step 1/1. Its function is as follows. Involved in the catabolism of arginine. This is Arginase from Bacillus subtilis (strain 168).